Here is a 200-residue protein sequence, read N- to C-terminus: 3-isopropylmalate dehydratase small subunit (200 aa).

Belongs to the LeuD family. LeuD type 1 subfamily. In terms of assembly, heterodimer of LeuC and LeuD.

It catalyses the reaction (2R,3S)-3-isopropylmalate = (2S)-2-isopropylmalate. It functions in the pathway amino-acid biosynthesis; L-leucine biosynthesis; L-leucine from 3-methyl-2-oxobutanoate: step 2/4. Catalyzes the isomerization between 2-isopropylmalate and 3-isopropylmalate, via the formation of 2-isopropylmaleate. The polypeptide is 3-isopropylmalate dehydratase small subunit (Yersinia pseudotuberculosis serotype O:1b (strain IP 31758)).